We begin with the raw amino-acid sequence, 660 residues long: WD repeat-containing protein 48 homolog (660 aa).

8 WD repeats span residues 23 to 78 (MHRS…RDLH), 84 to 120 (HHTDWVNDIVLCCGVISASSDTTVKVWNAQKGFCMST), 123 to 162 (THRDYVRALAYARDVEMVASGGFDQLIYLWDIATLTKLTA), 174 to 213 (GNKDSIYSLATNPSGTVVISGSTEKVLRVFDPRACQKLMK), 216 to 255 (GHTDNVKAVVVNRDGTQCISASSDGTIKLWSIGQQCCISS), 258 to 297 (CHSESVWALQVDSNFSCVYSGGRDKRIFRTAINDFKTAQL), 300 to 341 (IEDA…ISVE), and 362 to 401 (PGAASIRQHVVLNDKRHIVTKDTDDNVAMWDVLKGRKVCD).

The protein belongs to the WD repeat WDR48 family.

Its function is as follows. Regulator of deubiquitinating complexes. Activates deubiquitination by increasing the catalytic turnover without increasing the affinity of deubiquitinating enzymes for the substrate. This is WD repeat-containing protein 48 homolog from Brugia malayi (Filarial nematode worm).